The following is a 339-amino-acid chain: 2,3,4,5-tetrahydropyridine-2,6-dicarboxylate N-succinyltransferase (339 aa).

Residue aspartate 180 coordinates Mg(2+). The active-site Acyl-anhydride intermediate is glutamate 213. Residues arginine 215, glycine 230, serine 233, alanine 256, 271–272 (EA), glycine 279, and lysine 300 contribute to the succinyl-CoA site.

This sequence belongs to the type 2 tetrahydrodipicolinate N-succinyltransferase family. In terms of assembly, homotrimer.

The protein localises to the cytoplasm. The catalysed reaction is (S)-2,3,4,5-tetrahydrodipicolinate + succinyl-CoA + H2O = (S)-2-succinylamino-6-oxoheptanedioate + CoA. Its pathway is amino-acid biosynthesis; L-lysine biosynthesis via DAP pathway; LL-2,6-diaminopimelate from (S)-tetrahydrodipicolinate (succinylase route): step 1/3. Functionally, catalyzes the conversion of the cyclic tetrahydrodipicolinate (THDP) into the acyclic N-succinyl-L-2-amino-6-oxopimelate using succinyl-CoA. The protein is 2,3,4,5-tetrahydropyridine-2,6-dicarboxylate N-succinyltransferase of Bifidobacterium longum (strain NCC 2705).